A 351-amino-acid polypeptide reads, in one-letter code: Molybdenum import ATP-binding protein ModC (351 aa).

In terms of domain architecture, ABC transporter spans Met-1–Ser-229. Gly-31–Thr-38 contacts ATP. Positions Gln-289–Met-351 constitute a Mop domain.

The protein belongs to the ABC transporter superfamily. Molybdate importer (TC 3.A.1.8) family. As to quaternary structure, the complex is composed of two ATP-binding proteins (ModC), two transmembrane proteins (ModB) and a solute-binding protein (ModA).

It is found in the cell inner membrane. The enzyme catalyses molybdate(out) + ATP + H2O = molybdate(in) + ADP + phosphate + H(+). Part of the ABC transporter complex ModABC involved in molybdenum import. Responsible for energy coupling to the transport system. The sequence is that of Molybdenum import ATP-binding protein ModC from Haemophilus influenzae (strain ATCC 51907 / DSM 11121 / KW20 / Rd).